The following is a 164-amino-acid chain: Protein SprT (164 aa).

The region spanning 14–156 is the SprT-like domain; the sequence is QQAETFFKRP…LCKRCRETLV (143 aa). His-69 is a Zn(2+) binding site. The active site involves Glu-70. His-73 is a Zn(2+) binding site.

Belongs to the SprT family. Zn(2+) serves as cofactor.

The protein localises to the cytoplasm. This is Protein SprT from Pseudomonas putida (strain W619).